A 163-amino-acid chain; its full sequence is Ribosome maturation factor RimM (163 aa).

Residues 92 to 161 (PGEYYHHDLI…AETVTVNAAF (70 aa)) form the PRC barrel domain.

The protein belongs to the RimM family. Binds ribosomal protein uS19.

The protein resides in the cytoplasm. Functionally, an accessory protein needed during the final step in the assembly of 30S ribosomal subunit, possibly for assembly of the head region. Essential for efficient processing of 16S rRNA. May be needed both before and after RbfA during the maturation of 16S rRNA. It has affinity for free ribosomal 30S subunits but not for 70S ribosomes. The chain is Ribosome maturation factor RimM from Sphingopyxis alaskensis (strain DSM 13593 / LMG 18877 / RB2256) (Sphingomonas alaskensis).